We begin with the raw amino-acid sequence, 482 residues long: O-acyltransferase ausP (482 aa).

Catalysis depends on proton acceptor residues H180 and D412.

This sequence belongs to the plant acyltransferase family. As to quaternary structure, monomer.

Its pathway is secondary metabolite biosynthesis; terpenoid biosynthesis. In terms of biological role, O-acyltransferase; part of the gene cluster B that mediates the biosynthesis of the fungal meroterpenoid acetoxydehydroaustin. The first step of the pathway is the synthesis of 3,5-dimethylorsellinic acid by the polyketide synthase ausA. 3,5-dimethylorsellinic acid is then prenylated by the polyprenyl transferase ausN. Further epoxidation by the FAD-dependent monooxygenase ausM and cyclization by the probable terpene cyclase ausL lead to the formation of protoaustinoid A. Protoaustinoid A is then oxidized to spiro-lactone preaustinoid A3 by the combined action of the FAD-binding monooxygenases ausB and ausC, and the dioxygenase ausE. Acid-catalyzed keto-rearrangement and ring contraction of the tetraketide portion of preaustinoid A3 by ausJ lead to the formation of preaustinoid A4. The aldo-keto reductase ausK, with the help of ausH, is involved in the next step by transforming preaustinoid A4 into isoaustinone which is in turn hydroxylated by the P450 monooxygenase ausI to form austinolide. The cytochrome P450 monooxygenase ausG then modifies austinolide to austinol. Austinol is further acetylated to austin by the O-acetyltransferase ausP, which spontaneously changes to dehydroaustin. The cytochrome P450 monooxygenase then converts dehydroaustin is into 7-dehydrodehydroaustin. The hydroxylation catalyzed by ausR permits the second O-acetyltransferase ausQ to add an additional acetyl group to the molecule, leading to the formation of acetoxydehydroaustin. Due to genetic rearrangements of the clusters and the subsequent loss of some enzymes, the end product of the Penicillium brasilianum austinoid biosynthesis clusters is acetoxydehydroaustin. The polypeptide is O-acyltransferase ausP (Penicillium brasilianum).